The primary structure comprises 86 residues: Small ribosomal subunit protein uS17 (86 aa).

This sequence belongs to the universal ribosomal protein uS17 family. As to quaternary structure, part of the 30S ribosomal subunit.

Its function is as follows. One of the primary rRNA binding proteins, it binds specifically to the 5'-end of 16S ribosomal RNA. The polypeptide is Small ribosomal subunit protein uS17 (Caldicellulosiruptor saccharolyticus (strain ATCC 43494 / DSM 8903 / Tp8T 6331)).